The following is a 98-amino-acid chain: Small ribosomal subunit protein bS20 (98 aa).

This sequence belongs to the bacterial ribosomal protein bS20 family.

In terms of biological role, binds directly to 16S ribosomal RNA. The sequence is that of Small ribosomal subunit protein bS20 from Synechococcus elongatus (strain ATCC 33912 / PCC 7942 / FACHB-805) (Anacystis nidulans R2).